The primary structure comprises 131 residues: Protein anoxia up-regulated (131 aa).

Residues 1–24 (MVYESGFTTRRTYSSRPVTTSYAV) are compositionally biased toward polar residues. Residues 1–121 (MVYESGFTTR…STTSGNLPGG (121 aa)) form a disordered region. Low complexity-rich tracts occupy residues 44–53 (SSDYSYTSKS) and 98–116 (TSTT…TTSG).

In terms of tissue distribution, concentrated in lamina neurons, first optic lobe neurons and cortical neurons of central brain.

In terms of biological role, plays an important role in the regulation of tissue responsiveness to oxygen deprivation. This chain is Protein anoxia up-regulated, found in Drosophila melanogaster (Fruit fly).